The sequence spans 712 residues: Ribosomal RNA large subunit methyltransferase K/L (712 aa).

Residues 42 to 153 (QALRIVMWSR…KGRASLSIDL (112 aa)) form the THUMP domain.

The protein belongs to the methyltransferase superfamily. RlmKL family.

The protein resides in the cytoplasm. It carries out the reaction guanosine(2445) in 23S rRNA + S-adenosyl-L-methionine = N(2)-methylguanosine(2445) in 23S rRNA + S-adenosyl-L-homocysteine + H(+). The enzyme catalyses guanosine(2069) in 23S rRNA + S-adenosyl-L-methionine = N(2)-methylguanosine(2069) in 23S rRNA + S-adenosyl-L-homocysteine + H(+). Functionally, specifically methylates the guanine in position 2445 (m2G2445) and the guanine in position 2069 (m7G2069) of 23S rRNA. The polypeptide is Ribosomal RNA large subunit methyltransferase K/L (Stenotrophomonas maltophilia (strain K279a)).